Consider the following 762-residue polypeptide: Cellulose synthase-like protein H2 (762 aa).

Residues 1 to 15 show a composition bias toward low complexity; it reads MAVVAAAAATGSTTR. The tract at residues 1 to 39 is disordered; the sequence is MAVVAAAAATGSTTRSGGGGGEGTRSGRKKPPPPPLQER. 2 helical membrane passes run 47-67 and 81-101; these read AWAWRLAGLAVLLLLLALLAL and GVWRVALVCEAWFAALCALNV. Catalysis depends on residues Asp180 and Asp470. Helical transmembrane passes span 541 to 561, 582 to 602, 619 to 639, 673 to 693, 708 to 728, and 739 to 759; these read LAYLIVLGWPLRAPFELCYGL, FSVPLALFISYNTYNFMEYMA, IISVSAWTLAFLTVLLKSLGL, LPVFIPVTALAMLNIVAVTVG, APGIGEFMCCGWLVLCFFPFV, and GIPWSVKLKASLLVAMFVTFC.

This sequence belongs to the glycosyltransferase 2 family. Plant cellulose synthase-like H subfamily.

It is found in the golgi apparatus membrane. Functionally, thought to be a Golgi-localized beta-glycan synthase that polymerize the backbones of noncellulosic polysaccharides (hemicelluloses) of plant cell wall. In Oryza sativa subsp. indica (Rice), this protein is Cellulose synthase-like protein H2 (CSLH2).